A 327-amino-acid polypeptide reads, in one-letter code: Undecaprenyl-phosphate 4-deoxy-4-formamido-L-arabinose transferase (327 aa).

The next 2 helical transmembrane spans lie at 236 to 256 and 270 to 290; these read LSLV…LLVV and VFTL…GMGL.

The protein belongs to the glycosyltransferase 2 family.

It localises to the cell inner membrane. The enzyme catalyses UDP-4-deoxy-4-formamido-beta-L-arabinose + di-trans,octa-cis-undecaprenyl phosphate = 4-deoxy-4-formamido-alpha-L-arabinopyranosyl di-trans,octa-cis-undecaprenyl phosphate + UDP. The protein operates within glycolipid biosynthesis; 4-amino-4-deoxy-alpha-L-arabinose undecaprenyl phosphate biosynthesis; 4-amino-4-deoxy-alpha-L-arabinose undecaprenyl phosphate from UDP-4-deoxy-4-formamido-beta-L-arabinose and undecaprenyl phosphate: step 1/2. Its pathway is bacterial outer membrane biogenesis; lipopolysaccharide biosynthesis. Its function is as follows. Catalyzes the transfer of 4-deoxy-4-formamido-L-arabinose from UDP to undecaprenyl phosphate. The modified arabinose is attached to lipid A and is required for resistance to polymyxin and cationic antimicrobial peptides. In Yersinia enterocolitica serotype O:8 / biotype 1B (strain NCTC 13174 / 8081), this protein is Undecaprenyl-phosphate 4-deoxy-4-formamido-L-arabinose transferase.